We begin with the raw amino-acid sequence, 95 residues long: Glutaredoxin 1 (95 aa).

A Glutaredoxin domain is found at 1–95; sequence MNKSILHTII…DKLLEHQPKN (95 aa). Cysteine 17 and cysteine 20 are disulfide-bonded.

Belongs to the glutaredoxin family. Monomer.

The protein resides in the cytoplasm. Its function is as follows. Has a glutathione-disulfide oxidoreductase activity in the presence of NADPH and glutathione reductase. Reduces low molecular weight disulfides and proteins. This chain is Glutaredoxin 1 (grxC1), found in Rickettsia prowazekii (strain Madrid E).